Reading from the N-terminus, the 413-residue chain is Sprouty-related, EVH1 domain-containing protein 2 (413 aa).

The region spanning 5 to 122 is the WH1 domain; sequence THPNDDSYIV…RGVRKALEDL (118 aa). Positions 122-163 are disordered; it reads LTEGSTTSSSTLQNEAELGDDDVFTTATDSSSNSSQKKDHST. Residues 195 to 248 enclose the KBD domain; sequence FSRNLFPFEDEEIVRINPRERWMITGYEDYRYAAVPDKFIQPEDSDSYVQISKN. Positions 303–411 constitute an SPR domain; it reads RCVYCRDMFN…CGCCGGKHKA (109 aa).

The protein resides in the cell membrane. It localises to the cytoplasmic vesicle. Its subcellular location is the secretory vesicle membrane. It is found in the cytoplasm. Functionally, negatively regulates Ras signaling pathways and downstream activation of MAP kinases. This Danio rerio (Zebrafish) protein is Sprouty-related, EVH1 domain-containing protein 2 (spred2).